The primary structure comprises 418 residues: Gamma-glutamyl phosphate reductase (418 aa).

It belongs to the gamma-glutamyl phosphate reductase family.

It is found in the cytoplasm. It catalyses the reaction L-glutamate 5-semialdehyde + phosphate + NADP(+) = L-glutamyl 5-phosphate + NADPH + H(+). It participates in amino-acid biosynthesis; L-proline biosynthesis; L-glutamate 5-semialdehyde from L-glutamate: step 2/2. Its function is as follows. Catalyzes the NADPH-dependent reduction of L-glutamate 5-phosphate into L-glutamate 5-semialdehyde and phosphate. The product spontaneously undergoes cyclization to form 1-pyrroline-5-carboxylate. In Desulfatibacillum aliphaticivorans, this protein is Gamma-glutamyl phosphate reductase.